The following is a 397-amino-acid chain: Acetate kinase (397 aa).

Asn-7 contributes to the Mg(2+) binding site. An ATP-binding site is contributed by Lys-14. Residue Arg-90 coordinates substrate. The Proton donor/acceptor role is filled by Asp-147. ATP contacts are provided by residues 207-211 (HLGNG), 282-284 (DFR), and 330-334 (GLGEN). Glu-383 is a binding site for Mg(2+).

It belongs to the acetokinase family. Homodimer. Mg(2+) is required as a cofactor. Mn(2+) serves as cofactor.

The protein localises to the cytoplasm. The catalysed reaction is acetate + ATP = acetyl phosphate + ADP. Its pathway is metabolic intermediate biosynthesis; acetyl-CoA biosynthesis; acetyl-CoA from acetate: step 1/2. Catalyzes the formation of acetyl phosphate from acetate and ATP. Can also catalyze the reverse reaction. In Clostridium botulinum (strain Kyoto / Type A2), this protein is Acetate kinase.